The primary structure comprises 455 residues: Zinc finger protein ZPR1 homolog (455 aa).

C4-type zinc fingers lie at residues 28–60 and 247–279; these read CPVCEEDGETRIMCTSIPYYRAVILMSFECPHC and CPNCHGPTEVKMKPTDIPFFQTVIIMSLACDRC.

It belongs to the ZPR1 family.

The protein localises to the nucleus. The chain is Zinc finger protein ZPR1 homolog from Caenorhabditis elegans.